The sequence spans 290 residues: Eukaryotic translation initiation factor 3 subunit F-2 (290 aa).

An MPN domain is found at 12–150 (VRLQPLVLFQ…TRLYCGVTMG (139 aa)).

It belongs to the eIF-3 subunit F family. In terms of assembly, component of the eukaryotic translation initiation factor 3 (eIF-3) complex. The eIF-3 complex interacts with pix.

The protein localises to the cytoplasm. In terms of biological role, component of the eukaryotic translation initiation factor 3 (eIF-3) complex, which is involved in protein synthesis of a specialized repertoire of mRNAs and, together with other initiation factors, stimulates binding of mRNA and methionyl-tRNAi to the 40S ribosome. The eIF-3 complex specifically targets and initiates translation of a subset of mRNAs involved in cell proliferation. This chain is Eukaryotic translation initiation factor 3 subunit F-2, found in Drosophila virilis (Fruit fly).